A 533-amino-acid polypeptide reads, in one-letter code: MGFKKFFGIRPPEEDTPERNRDLLTEEGIATKNPNSFRKEKFAAYGKFAAANAQDHVYAPAGYEQYARPGAGADKDELESLNRAATDAGDIGNTSRVGQPQQRDPYAVNDNYNPYANGTARDPYATAQPYARQAPVRQAGPRHAAGTPYGSAAVPQGGPGNPYGGSTAGAGTGRNPYQKNMNATVYPPAAGKTANPYASMAQDPYGKGEQRGIAGGPVAMPVPMQPRPQAAAETPRPQAAAEKRAPAVDVDDLNAVIEPTNEDDDLNNSIHEGNEGLNGQGQAPRRGFQTFEELQREQEMKQQMEEDEEVDEIKQQIRFTKQSSVASTRNTLKMAQDAELAGMNSLGMLGHQSEKLNNVERNLNLMKVQNRVAEDKVAELKRLNRNILAVHVGNPFTSKRKVREAEERIKNQRMQDKMQQEETTTQLMSSTNRIENALNDERHSVRERYQRDQALERAKKYQFENDEEDDEMEFEIDRNLDKIGQVSGRLKKLAIAAGQEIDSQQSRIKRIEEDADDMDIRIHLNTSRLTNIR.

Disordered regions lie at residues 1 to 32 (MGFK…IATK), 68 to 184 (RPGA…MNAT), 200 to 246 (MAQD…KRAP), and 259 to 284 (PTNE…GQAP). Basic and acidic residues predominate over residues 11-24 (PPEEDTPERNRDLL). A compositionally biased stretch (polar residues) spans 92–102 (GNTSRVGQPQQ). Residues 157-172 (GGPGNPYGGSTAGAGT) are compositionally biased toward gly residues. Over residues 227–240 (RPQAAAETPRPQAA) the composition is skewed to low complexity. T-SNARE coiled-coil homology domains follow at residues 318 to 380 (RFTK…VAEL) and 470 to 532 (DEME…LTNI).

Belongs to the SNAP-25 family.

The polypeptide is Protein transport protein SEC9 (SEC9) (Eremothecium gossypii (strain ATCC 10895 / CBS 109.51 / FGSC 9923 / NRRL Y-1056) (Yeast)).